The following is a 207-amino-acid chain: Guanylate kinase (207 aa).

The Guanylate kinase-like domain occupies 7–185 (GIVLVLCAPS…AYDELRAAYI (179 aa)). ATP is bound at residue 14–21 (APSGTGKT).

Belongs to the guanylate kinase family.

The protein resides in the cytoplasm. The catalysed reaction is GMP + ATP = GDP + ADP. Essential for recycling GMP and indirectly, cGMP. The chain is Guanylate kinase from Nitratidesulfovibrio vulgaris (strain ATCC 29579 / DSM 644 / CCUG 34227 / NCIMB 8303 / VKM B-1760 / Hildenborough) (Desulfovibrio vulgaris).